Here is a 319-residue protein sequence, read N- to C-terminus: MARKKIALIGAGNIGGTLAHLSLIKQLGDVVLFDIAPGMPQGKALDLLQSCPIEGVDFKVRGTNDYKDLEHSDVVIVTAGVPRKPGMSRDDLLGINIKVMQAVGEGIKHNCPDAFVICITNPLDIMVNMLQKFSGVPDNKIVGMAGVLDSARFRTFLADELNVSVQQVQAYVMGGHGDTMVPLTKMSNVAGVSLEQLVKEGKISQERLDSIVARTRNGGGEIVALLKTGSAYYAPAAAGIQMAESYLRDKKMILPCAAKIKAGMYGVDEDLFVGVPTEISANGVRPIHVEISEKEKEQLQVSINAVKELNKAAAEILAN.

NAD(+) is bound by residues 10–15 and aspartate 34; that span reads GAGNIG. 2 residues coordinate substrate: arginine 83 and arginine 89. NAD(+) contacts are provided by residues asparagine 96 and 119–121; that span reads ITN. Substrate is bound by residues asparagine 121 and arginine 152. Histidine 176 serves as the catalytic Proton acceptor.

It belongs to the LDH/MDH superfamily. MDH type 3 family.

It carries out the reaction (S)-malate + NAD(+) = oxaloacetate + NADH + H(+). Its function is as follows. Catalyzes the reversible oxidation of malate to oxaloacetate. The chain is Malate dehydrogenase from Francisella philomiragia subsp. philomiragia (strain ATCC 25017 / CCUG 19701 / FSC 153 / O#319-036).